The following is a 68-amino-acid chain: Large ribosomal subunit protein bL33c (68 aa).

This sequence belongs to the bacterial ribosomal protein bL33 family.

It localises to the plastid. This Cuscuta exaltata (Tall dodder) protein is Large ribosomal subunit protein bL33c.